Consider the following 241-residue polypeptide: 4-hydroxy-tetrahydrodipicolinate reductase (241 aa).

NAD(+)-binding positions include 7–12 (GVNGHM), 74–76 (GTT), and 98–101 (STNM). H131 serves as the catalytic Proton donor/acceptor. A (S)-2,3,4,5-tetrahydrodipicolinate-binding site is contributed by H132. The Proton donor role is filled by K135. A (S)-2,3,4,5-tetrahydrodipicolinate-binding site is contributed by 141–142 (GS).

Belongs to the DapB family.

It is found in the cytoplasm. The enzyme catalyses (S)-2,3,4,5-tetrahydrodipicolinate + NAD(+) + H2O = (2S,4S)-4-hydroxy-2,3,4,5-tetrahydrodipicolinate + NADH + H(+). It catalyses the reaction (S)-2,3,4,5-tetrahydrodipicolinate + NADP(+) + H2O = (2S,4S)-4-hydroxy-2,3,4,5-tetrahydrodipicolinate + NADPH + H(+). Its pathway is amino-acid biosynthesis; L-lysine biosynthesis via DAP pathway; (S)-tetrahydrodipicolinate from L-aspartate: step 4/4. Its function is as follows. Catalyzes the conversion of 4-hydroxy-tetrahydrodipicolinate (HTPA) to tetrahydrodipicolinate. The sequence is that of 4-hydroxy-tetrahydrodipicolinate reductase from Alkaliphilus oremlandii (strain OhILAs) (Clostridium oremlandii (strain OhILAs)).